The chain runs to 277 residues: Large ribosomal subunit protein uL2 (277 aa).

2 disordered regions span residues 36-55 (PLPKKAGRNNQGKLTVRHHG) and 213-277 (WKGI…RKKK).

It belongs to the universal ribosomal protein uL2 family. In terms of assembly, part of the 50S ribosomal subunit. Forms a bridge to the 30S subunit in the 70S ribosome.

One of the primary rRNA binding proteins. Required for association of the 30S and 50S subunits to form the 70S ribosome, for tRNA binding and peptide bond formation. It has been suggested to have peptidyltransferase activity; this is somewhat controversial. Makes several contacts with the 16S rRNA in the 70S ribosome. The protein is Large ribosomal subunit protein uL2 of Staphylococcus aureus (strain bovine RF122 / ET3-1).